The chain runs to 410 residues: Peptidase T (410 aa).

Position 78 (His-78) interacts with Zn(2+). The active site involves Asp-80. Residue Asp-139 participates in Zn(2+) binding. Glu-173 functions as the Proton acceptor in the catalytic mechanism. Residues Glu-174, Asp-196, and His-378 each coordinate Zn(2+).

The protein belongs to the peptidase M20B family. It depends on Zn(2+) as a cofactor.

It is found in the cytoplasm. It carries out the reaction Release of the N-terminal residue from a tripeptide.. Its function is as follows. Cleaves the N-terminal amino acid of tripeptides. The polypeptide is Peptidase T (Shewanella woodyi (strain ATCC 51908 / MS32)).